The sequence spans 506 residues: GMP synthase [glutamine-hydrolyzing] (506 aa).

One can recognise a Glutamine amidotransferase type-1 domain in the interval 2-190 (SIVILDFGSQ…FLDICGVTRD (189 aa)). The Nucleophile role is filled by C79. Residues H165 and E167 contribute to the active site. A GMPS ATP-PPase domain is found at 191 to 381 (WNAEHIVDEL…LGLPDHIRMR (191 aa)). 219-225 (SGGVDSS) is an ATP binding site.

As to quaternary structure, homodimer.

The enzyme catalyses XMP + L-glutamine + ATP + H2O = GMP + L-glutamate + AMP + diphosphate + 2 H(+). It functions in the pathway purine metabolism; GMP biosynthesis; GMP from XMP (L-Gln route): step 1/1. Its function is as follows. Catalyzes the synthesis of GMP from XMP. The polypeptide is GMP synthase [glutamine-hydrolyzing] (guaA) (Deinococcus radiodurans (strain ATCC 13939 / DSM 20539 / JCM 16871 / CCUG 27074 / LMG 4051 / NBRC 15346 / NCIMB 9279 / VKM B-1422 / R1)).